The sequence spans 416 residues: Tyrosine--tRNA ligase (416 aa).

Tyr-40 provides a ligand contact to L-tyrosine. Positions 45 to 54 (ATAASLHVGH) match the 'HIGH' region motif. L-tyrosine is bound by residues Tyr-177 and Gln-181. The 'KMSKS' region signature appears at 237–241 (KMGKS). Lys-240 provides a ligand contact to ATP. Residues 351-416 (LSVAHFLVAA…RKKHKLVRLS (66 aa)) form the S4 RNA-binding domain.

Belongs to the class-I aminoacyl-tRNA synthetase family. TyrS type 1 subfamily. Homodimer.

The protein resides in the cytoplasm. The enzyme catalyses tRNA(Tyr) + L-tyrosine + ATP = L-tyrosyl-tRNA(Tyr) + AMP + diphosphate + H(+). Its function is as follows. Catalyzes the attachment of tyrosine to tRNA(Tyr) in a two-step reaction: tyrosine is first activated by ATP to form Tyr-AMP and then transferred to the acceptor end of tRNA(Tyr). The protein is Tyrosine--tRNA ligase of Cereibacter sphaeroides (strain KD131 / KCTC 12085) (Rhodobacter sphaeroides).